We begin with the raw amino-acid sequence, 125 residues long: Holo-[acyl-carrier-protein] synthase (125 aa).

Mg(2+) contacts are provided by Asp-8 and Glu-57.

It belongs to the P-Pant transferase superfamily. AcpS family. Requires Mg(2+) as cofactor.

It localises to the cytoplasm. It carries out the reaction apo-[ACP] + CoA = holo-[ACP] + adenosine 3',5'-bisphosphate + H(+). In terms of biological role, transfers the 4'-phosphopantetheine moiety from coenzyme A to a Ser of acyl-carrier-protein. The sequence is that of Holo-[acyl-carrier-protein] synthase from Thermus thermophilus (strain ATCC BAA-163 / DSM 7039 / HB27).